A 266-amino-acid chain; its full sequence is Large ribosomal subunit protein eL8 (266 aa).

Over residues 1 to 11 (MPKGKKAKGKK) the composition is skewed to basic residues. Disordered stretches follow at residues 1 to 28 (MPKG…KKVV) and 105 to 134 (ETKQ…KRPP). A compositionally biased stretch (basic and acidic residues) spans 116–130 (ARAEQKAAGKGDAPT).

Belongs to the eukaryotic ribosomal protein eL8 family. In terms of assembly, component of the large ribosomal subunit.

The protein resides in the cytoplasm. Functionally, component of the large ribosomal subunit. The ribosome is a large ribonucleoprotein complex responsible for the synthesis of proteins in the cell. The polypeptide is Large ribosomal subunit protein eL8 (rpl7a) (Takifugu rubripes (Japanese pufferfish)).